The primary structure comprises 652 residues: MAPPRNVVKIAVQMRDAIPQLIQLDQAKPLAAVLKEVCDAWSLPHSERYALQFADGHRRYITENNRMEIKNGSILCLSTAPDREAERLLRGLQSESREGRREALRHLLLLAPDLTFAREVISRDGLQRLGTIIEDGDDLGEVLALALRAFLELMEHGVVSWETLSIPFVRKVVCYVNMNLMDASVQPLALGLLENVTLSSPTLGQLVKSEVPLDRLLVHLQVMNQQLQTKAMALLTALLQGATPAERKHMLDYLWQRNLRQFIYKNIIHSAAPLGDEMAHHLYVLQALMLGLLEPRMRTPLDPYSQEQREQLQALRQAAFEPEGESVGAGLSADRRRSLCAREFRKLGFSNSNPAQDLERVPPGLLALDNMLYFSRQAPSAYSRFVLENSSREDKHECPFARSSIQLTVLLCDLLHVGEPCSETAQDFSPMFFGQDQSFHELFCVSIQLLNKTWKEMRATQEDFDKVMQVVREQLARTLALKPSSLELFRTKVNALTYGEVLRLRQTERLHQEGTLAPPILELREKLKPELMGLIRQQRLLRLCEGTLFHKISSRRRQDKLWFCCLSPNHKVLQYGDVEEGVGPPTPESLPEQLPVADIRALLTGKDCPHVREKGSGKQNKDVCELAFSVSYDHGEEEAYLNFIAPSKREMG.

One can recognise an ELMO domain in the interval Glu307–Leu479.

Probably interacts directly with the SH3-domain of DOCK1 via its SH3-binding site. Part of a complex with DOCK1 and RAC1. Interacts with ADGRB3.

It localises to the cytoplasm. Functionally, involved in cytoskeletal rearrangements required for phagocytosis of apoptotic cells and cell motility. Acts in association with DOCK1 and CRK. Was initially proposed to be required in complex with DOCK1 to activate Rac Rho small GTPases. May enhance the guanine nucleotide exchange factor (GEF) activity of DOCK1. This chain is Engulfment and cell motility protein 3 (ELMO3), found in Bos taurus (Bovine).